The chain runs to 130 residues: Small ribosomal subunit protein uS9 (130 aa).

This sequence belongs to the universal ribosomal protein uS9 family.

The protein is Small ribosomal subunit protein uS9 of Yersinia pseudotuberculosis serotype O:1b (strain IP 31758).